A 495-amino-acid polypeptide reads, in one-letter code: Glycerol kinase (495 aa).

Position 11 (Thr11) interacts with ADP. The ATP site is built by Thr11, Thr12, and Ser13. Thr11 lines the sn-glycerol 3-phosphate pocket. Residue Arg15 participates in ADP binding. Sn-glycerol 3-phosphate is bound by residues Arg81, Glu82, Tyr133, and Asp242. Glycerol is bound by residues Arg81, Glu82, Tyr133, Asp242, and Gln243. ADP contacts are provided by Thr264 and Gly307. ATP is bound by residues Thr264, Gly307, Gln311, and Gly408. 2 residues coordinate ADP: Gly408 and Asn412.

The protein belongs to the FGGY kinase family.

The enzyme catalyses glycerol + ATP = sn-glycerol 3-phosphate + ADP + H(+). Its pathway is polyol metabolism; glycerol degradation via glycerol kinase pathway; sn-glycerol 3-phosphate from glycerol: step 1/1. Its activity is regulated as follows. Inhibited by fructose 1,6-bisphosphate (FBP). Functionally, key enzyme in the regulation of glycerol uptake and metabolism. Catalyzes the phosphorylation of glycerol to yield sn-glycerol 3-phosphate. This chain is Glycerol kinase, found in Citrifermentans bemidjiense (strain ATCC BAA-1014 / DSM 16622 / JCM 12645 / Bem) (Geobacter bemidjiensis).